The chain runs to 417 residues: Cobalamin binding intrinsic factor (417 aa).

The first 18 residues, 1–18, serve as a signal peptide directing secretion; sequence MAWLSFYLLNVLWAVAGT. 3 cysteine pairs are disulfide-bonded: Cys-26-Cys-246, Cys-103-Cys-288, and Cys-143-Cys-182. Asp-171 contacts cob(II)alamin. A Phosphoserine modification is found at Ser-191. The N-linked (GlcNAc...) asparagine glycan is linked to Asn-209. The cob(II)alamin site is built by Asp-222 and Gln-270. Asn-311 and Asn-330 each carry an N-linked (GlcNAc...) asparagine glycan. Cob(II)alamin contacts are provided by residues 365 to 370 and 386 to 395; these read SWGLIV and WEFLSGKTPL. An N-linked (GlcNAc...) asparagine glycan is attached at Asn-413.

The protein belongs to the eukaryotic cobalamin transport proteins family. Interacts with CUBN (via CUB domains). The N-terminus is blocked. In terms of tissue distribution, gastric mucosa.

The protein resides in the secreted. In terms of biological role, promotes absorption of the essential vitamin cobalamin (Cbl) in the ileum. After interaction with CUBN, the CBLIF-cobalamin complex is internalized via receptor-mediated endocytosis. The polypeptide is Cobalamin binding intrinsic factor (Rattus norvegicus (Rat)).